A 467-amino-acid polypeptide reads, in one-letter code: MKQFMDENFLLSTDTAKILYHDYAKNKPIFDYHCHLNPREVAENRQFNDLAEIWLEGDHYKWRALRTAGVPEELITGKATNYQKYLAWAKTVPLCIGNPIYHWTHLELRRPFGITNMLFNPQNAEKIWHQCNEMLQQPEFSARGIMQKMNVKLVGTTDDPIDSLQYHQAIKNDESFDIDVVPSWRPDKVFKIELPQFNDYLVQLSEIADVDIYTFADLKKALLKRLEYFDAQGCKSADHGMEIVRFSAIPDESVLNSILQKRLQNQPLLEEEVAQFSTAILVWLASEYCKRHWVMQMHIGAIRNNNSRMFALLGADSGFDSIGDRTYAYPLSRLLDAMDKENQLPKTILYCLNPRDNEMIASMIGNFQGDGIAGKIQFGSGWWFNDQKDGMERQLQQLSQLGLLSQFVGMLTDSRSFLSYTRHEYFRRILCEMIGGWVEKGEAPNDISLLGKMIEDICFNNAKNYFK.

Belongs to the metallo-dependent hydrolases superfamily. Uronate isomerase family.

The enzyme catalyses D-glucuronate = D-fructuronate. It catalyses the reaction aldehydo-D-galacturonate = keto-D-tagaturonate. Its pathway is carbohydrate metabolism; pentose and glucuronate interconversion. The sequence is that of Uronate isomerase from Haemophilus influenzae (strain 86-028NP).